The sequence spans 421 residues: 3-isopropylmalate dehydratase large subunit (421 aa).

Residues Cys-302, Cys-362, and Cys-365 each coordinate [4Fe-4S] cluster.

It belongs to the aconitase/IPM isomerase family. LeuC type 2 subfamily. Heterodimer of LeuC and LeuD. The cofactor is [4Fe-4S] cluster.

It carries out the reaction (2R,3S)-3-isopropylmalate = (2S)-2-isopropylmalate. The protein operates within amino-acid biosynthesis; L-leucine biosynthesis; L-leucine from 3-methyl-2-oxobutanoate: step 2/4. Catalyzes the isomerization between 2-isopropylmalate and 3-isopropylmalate, via the formation of 2-isopropylmaleate. The protein is 3-isopropylmalate dehydratase large subunit of Campylobacter concisus (strain 13826).